The primary structure comprises 276 residues: Syntaxin-12 (276 aa).

N-acetylserine is present on S2. At S2 to R248 the chain is on the cytoplasmic side. Residues I33–S131 adopt a coiled-coil conformation. Phosphoserine is present on residues S139, S142, S218, and S225. A t-SNARE coiled-coil homology domain is found at L178 to A240. A helical; Anchor for type IV membrane protein membrane pass occupies residues K249 to I269. Topologically, residues W270–K276 are vesicular.

The protein belongs to the syntaxin family. In terms of assembly, interacts with NAPA and SNAP23. Identified in a complex containing STX6, STX12, VAMP4 and VTI1A. Associates with the BLOC-1 complex. Interacts with BLOC1S6. Interacts with GRIPAP1. Forms a complex with GRIP1, GRIA2 and NSG1; controls the intracellular fate of AMPAR and the endosomal sorting of the GRIA2 subunit toward recycling and membrane targeting. Interacts with NSG1. Interacts with TPC1. Interacts (via N-terminus) with VPS13B.

It localises to the endosome membrane. The protein resides in the golgi apparatus membrane. Its subcellular location is the endomembrane system. The protein localises to the early endosome membrane. It is found in the recycling endosome membrane. In terms of biological role, SNARE promoting fusion of transport vesicles with target membranes. Together with SNARE STX6, promotes movement of vesicles from endosomes to the cell membrane, and may therefore function in the endocytic recycling pathway. Through complex formation with GRIP1, GRIA2 and NSG1 controls the intracellular fate of AMPAR and the endosomal sorting of the GRIA2 subunit toward recycling and membrane targeting. This Homo sapiens (Human) protein is Syntaxin-12 (STX12).